We begin with the raw amino-acid sequence, 101 residues long: Ubiquitin-related modifier 1 homolog (101 aa).

Position 101 is a 1-thioglycine (Gly-101). A Glycyl lysine isopeptide (Gly-Lys) (interchain with K-? in acceptor proteins) cross-link involves residue Gly-101.

It belongs to the URM1 family. In terms of assembly, interacts with cer. Post-translationally, C-terminal thiocarboxylation occurs in 2 steps, it is first acyl-adenylated (-COAMP) via the hesA/moeB/thiF part of the MOCS3 homolog, then thiocarboxylated (-COSH) via the rhodanese domain of the MOCS3 homolog.

It localises to the cytoplasm. Its pathway is tRNA modification; 5-methoxycarbonylmethyl-2-thiouridine-tRNA biosynthesis. Its function is as follows. Acts as a sulfur carrier required for 2-thiolation of mcm(5)S(2)U at tRNA wobble positions of cytosolic tRNA(Lys), tRNA(Glu) and tRNA(Gln). Serves as sulfur donor in tRNA 2-thiolation reaction by being thiocarboxylated (-COSH) at its C-terminus by MOCS3. The sulfur is then transferred to tRNA to form 2-thiolation of mcm(5)S(2)U. Also acts as a ubiquitin-like protein (UBL) that is covalently conjugated via an isopeptide bond to lysine residues of target proteins such as Prx2/Jafrac1, Ciao1, Eip71CD and GILT1. The thiocarboxylated form serves as substrate for conjugation and oxidative stress specifically induces the formation of UBL-protein conjugates. This is Ubiquitin-related modifier 1 homolog from Drosophila erecta (Fruit fly).